The primary structure comprises 593 residues: Tectonic-1 (593 aa).

The first 22 residues, 1 to 22, serve as a signal peptide directing secretion; it reads MGSRGLPPLLLVLLNCYTSSST. Positions 37–72 are disordered; that stretch reads KEDLNSTKATPTTLQPSLSPRTPGTPRAPERSGPRP. Residue asparagine 41 is glycosylated (N-linked (GlcNAc...) asparagine). Over residues 42–58 the composition is skewed to polar residues; it reads STKATPTTLQPSLSPRT. Asparagine 303 is a glycosylation site (N-linked (GlcNAc...) asparagine). Omega-N-methylarginine is present on arginine 486. A glycan (N-linked (GlcNAc...) asparagine) is linked at asparagine 536.

The protein belongs to the tectonic family. Part of the tectonic-like complex (also named B9 complex).

It localises to the cytoplasm. The protein resides in the cytoskeleton. Its subcellular location is the cilium basal body. The protein localises to the secreted. Component of the tectonic-like complex, a complex localized at the transition zone of primary cilia and acting as a barrier that prevents diffusion of transmembrane proteins between the cilia and plasma membranes. Regulator of Hedgehog (Hh), required for both activation and inhibition of the Hh pathway in the patterning of the neural tube. During neural tube development, it is required for formation of the most ventral cell types and for full Hh pathway activation. Functions in Hh signal transduction to fully activate the pathway in the presence of high Hh levels and to repress the pathway in the absence of Hh signals. Modulates Hh signal transduction downstream of SMO and RAB23. This is Tectonic-1 (Tctn1) from Mus musculus (Mouse).